The primary structure comprises 350 residues: Twinfilin-1 (350 aa).

N-acetylserine is present on Ser2. Positions 2-139 constitute an ADF-H 1 domain; sequence SHQTGIQASE…SLHGYKKYLL (138 aa). A phosphoserine mark is found at Ser143 and Ser277. Residues 177-313 form the ADF-H 2 domain; sequence GVAFPISQEA…TADFLYEEVH (137 aa). Residue Tyr309 is modified to Phosphotyrosine. Residues 316-350 are disordered; the sequence is QHAHKQSFAKPKGPSGKRGIRRIIRGPAETEATTE. Thr349 is modified (phosphothreonine).

This sequence belongs to the actin-binding proteins ADF family. Twinfilin subfamily. Interacts with G-actin; ADP-actin form and capping protein (CP). May also be able to interact with TWF2 and phosphoinositides, PI(4,5)P2. When bound to PI(4,5)P2, it is down-regulated. Interacts with ACTG1. In terms of processing, phosphorylated on serine and threonine residues.

The protein resides in the cytoplasm. It localises to the cytoskeleton. Actin-binding protein involved in motile and morphological processes. Inhibits actin polymerization, likely by sequestering G-actin. By capping the barbed ends of filaments, it also regulates motility. Seems to play an important role in clathrin-mediated endocytosis and distribution of endocytic organelles. In Bos taurus (Bovine), this protein is Twinfilin-1 (TWF1).